A 210-amino-acid chain; its full sequence is Proteasome subunit beta (210 aa).

A propeptide spans 1-9 (MDNDKYLKG) (removed in mature form; by autocatalysis). T10 serves as the catalytic Nucleophile.

The protein belongs to the peptidase T1B family. The 20S proteasome core is composed of 14 alpha and 14 beta subunits that assemble into four stacked heptameric rings, resulting in a barrel-shaped structure. The two inner rings, each composed of seven catalytic beta subunits, are sandwiched by two outer rings, each composed of seven alpha subunits. The catalytic chamber with the active sites is on the inside of the barrel. Has a gated structure, the ends of the cylinder being occluded by the N-termini of the alpha-subunits. Is capped at one or both ends by the proteasome regulatory ATPase, PAN.

Its subcellular location is the cytoplasm. The catalysed reaction is Cleavage of peptide bonds with very broad specificity.. With respect to regulation, the formation of the proteasomal ATPase PAN-20S proteasome complex, via the docking of the C-termini of PAN into the intersubunit pockets in the alpha-rings, triggers opening of the gate for substrate entry. Interconversion between the open-gate and close-gate conformations leads to a dynamic regulation of the 20S proteasome proteolysis activity. Functionally, component of the proteasome core, a large protease complex with broad specificity involved in protein degradation. The protein is Proteasome subunit beta of Methanosarcina mazei (strain ATCC BAA-159 / DSM 3647 / Goe1 / Go1 / JCM 11833 / OCM 88) (Methanosarcina frisia).